The sequence spans 727 residues: 1,4-alpha-glucan branching enzyme GlgB (727 aa).

D405 (nucleophile) is an active-site residue. E458 (proton donor) is an active-site residue.

Belongs to the glycosyl hydrolase 13 family. GlgB subfamily. In terms of assembly, monomer.

It carries out the reaction Transfers a segment of a (1-&gt;4)-alpha-D-glucan chain to a primary hydroxy group in a similar glucan chain.. It participates in glycan biosynthesis; glycogen biosynthesis. Catalyzes the formation of the alpha-1,6-glucosidic linkages in glycogen by scission of a 1,4-alpha-linked oligosaccharide from growing alpha-1,4-glucan chains and the subsequent attachment of the oligosaccharide to the alpha-1,6 position. The polypeptide is 1,4-alpha-glucan branching enzyme GlgB (Yersinia pseudotuberculosis serotype O:1b (strain IP 31758)).